Here is a 553-residue protein sequence, read N- to C-terminus: Probable malate:quinone oxidoreductase (553 aa).

The tract at residues 524–553 (PPPKIDVNTPSQATGTAPARPAKASADMAL) is disordered.

It belongs to the MQO family. It depends on FAD as a cofactor.

The enzyme catalyses (S)-malate + a quinone = a quinol + oxaloacetate. Its pathway is carbohydrate metabolism; tricarboxylic acid cycle; oxaloacetate from (S)-malate (quinone route): step 1/1. In Burkholderia lata (strain ATCC 17760 / DSM 23089 / LMG 22485 / NCIMB 9086 / R18194 / 383), this protein is Probable malate:quinone oxidoreductase.